Here is a 142-residue protein sequence, read N- to C-terminus: Hemoglobin subunit alpha (142 aa).

An N-acetylserine modification is found at serine 1. A Globin domain is found at 1-142 (SLSEKNKAAV…VALALADRYR (142 aa)). O2 is bound at residue histidine 59. Position 88 (histidine 88) interacts with heme b.

This sequence belongs to the globin family. As to quaternary structure, heterotetramer of two alpha chains and two beta chains. Red blood cells.

Involved in oxygen transport from gills to the various peripheral tissues. The sequence is that of Hemoglobin subunit alpha (hba) from Pagothenia borchgrevinki (Bald rockcod).